A 209-amino-acid polypeptide reads, in one-letter code: Octanoyltransferase (209 aa).

The region spanning 30–209 (DHEPEIIYLV…IQTEFNKIFK (180 aa)) is the BPL/LPL catalytic domain. Residues 69–76 (RGGKFTFH), 143–145 (AIG), and 156–158 (GVA) each bind substrate. The active-site Acyl-thioester intermediate is the Cys-174.

This sequence belongs to the LipB family.

The protein localises to the cytoplasm. It catalyses the reaction octanoyl-[ACP] + L-lysyl-[protein] = N(6)-octanoyl-L-lysyl-[protein] + holo-[ACP] + H(+). It participates in protein modification; protein lipoylation via endogenous pathway; protein N(6)-(lipoyl)lysine from octanoyl-[acyl-carrier-protein]: step 1/2. Its function is as follows. Catalyzes the transfer of endogenously produced octanoic acid from octanoyl-acyl-carrier-protein onto the lipoyl domains of lipoate-dependent enzymes. Lipoyl-ACP can also act as a substrate although octanoyl-ACP is likely to be the physiological substrate. The sequence is that of Octanoyltransferase from Rickettsia peacockii (strain Rustic).